The following is a 544-amino-acid chain: Dihydrolipoyllysine-residue acetyltransferase component of pyruvate dehydrogenase complex (544 aa).

Lipoyl-binding domains lie at M1–D76 and I113–G188. N6-lipoyllysine is present on residues K42 and K154. A Peripheral subunit-binding (PSBD) domain is found at L242 to K279. The active site involves H516.

This sequence belongs to the 2-oxoacid dehydrogenase family. Forms a 24-polypeptide structural core with octahedral symmetry. Requires (R)-lipoate as cofactor.

The catalysed reaction is N(6)-[(R)-dihydrolipoyl]-L-lysyl-[protein] + acetyl-CoA = N(6)-[(R)-S(8)-acetyldihydrolipoyl]-L-lysyl-[protein] + CoA. The pyruvate dehydrogenase complex catalyzes the overall conversion of pyruvate to acetyl-CoA and CO(2). It contains multiple copies of three enzymatic components: pyruvate dehydrogenase (E1), dihydrolipoamide acetyltransferase (E2) and lipoamide dehydrogenase (E3). This Acholeplasma laidlawii protein is Dihydrolipoyllysine-residue acetyltransferase component of pyruvate dehydrogenase complex (pdhC).